The chain runs to 158 residues: Small ribosomal subunit protein uS7 (158 aa).

The protein belongs to the universal ribosomal protein uS7 family. In terms of assembly, part of the 30S ribosomal subunit. Contacts proteins S9 and S11.

Its function is as follows. One of the primary rRNA binding proteins, it binds directly to 16S rRNA where it nucleates assembly of the head domain of the 30S subunit. Is located at the subunit interface close to the decoding center, probably blocks exit of the E-site tRNA. The chain is Small ribosomal subunit protein uS7 from Flavobacterium johnsoniae (strain ATCC 17061 / DSM 2064 / JCM 8514 / BCRC 14874 / CCUG 350202 / NBRC 14942 / NCIMB 11054 / UW101) (Cytophaga johnsonae).